We begin with the raw amino-acid sequence, 383 residues long: Photosynthetic reaction center cytochrome c subunit (383 aa).

Positions 1 to 22 (MNLGKQLTLPAVAVVASVVLLG) are cleaved as a signal peptide. Cys-23 carries N-palmitoyl cysteine lipidation. Cys-23 carries S-diacylglycerol cysteine lipidation. Heme-binding residues include Met-94, Cys-107, Cys-110, His-111, Met-130, His-144, Cys-152, Cys-155, His-156, Met-236, Cys-247, Cys-250, His-251, Cys-307, Cys-310, and His-311. The segment at 335 to 383 (PAEAAPATEEAPAAEAEAVEAAPVEEAAPAPVEQAAAPVEDAAPAPQQL) is disordered.

In terms of assembly, component of the photosynthetic reaction center composed of protein subunits L (PufL), M (PufM), H (PuhA) and cytochrome C (PufC). The reaction center interacts with light-harvesting antenna complex LH1. Binds 4 heme groups per subunit.

It is found in the cellular chromatophore membrane. In terms of biological role, the reaction center of purple bacteria contains a tightly bound cytochrome molecule which re-reduces the photo oxidized primary electron donor. The protein is Photosynthetic reaction center cytochrome c subunit (pufC) of Allochromatium vinosum (strain ATCC 17899 / DSM 180 / NBRC 103801 / NCIMB 10441 / D) (Chromatium vinosum).